The following is a 217-amino-acid chain: MASTGLELLGMTLAVLGWLGTLVSCALPLWKVTAFIGNSIVVAQVVWEGLWMSCVVQSTGQMQCKVYDSLLALPQDLQAARALCVIALLLALLGLLVAITGAQCTTCVEDEGAKARIVLTAGVILLLAGILVLIPVCWTAHAIIQDFYNPLVAEALKRELGASLYLGWAAAALLMLGGGLLCCTCPPPQVERPRGPRLGYSIPSRSGASGLDKRDYV.

Residues 1–7 (MASTGLE) are Cytoplasmic-facing. Residues 8–28 (LLGMTLAVLGWLGTLVSCALP) traverse the membrane as a helical segment. Over 29 to 81 (LWKVTAFIGNSIVVAQVVWEGLWMSCVVQSTGQMQCKVYDSLLALPQDLQAAR) the chain is Extracellular. Residues 82 to 102 (ALCVIALLLALLGLLVAITGA) traverse the membrane as a helical segment. Over 103–116 (QCTTCVEDEGAKAR) the chain is Cytoplasmic. Residues 117–137 (IVLTAGVILLLAGILVLIPVC) traverse the membrane as a helical segment. Topologically, residues 138-159 (WTAHAIIQDFYNPLVAEALKRE) are extracellular. The helical transmembrane segment at 160–180 (LGASLYLGWAAAALLMLGGGL) threads the bilayer. Residues 181 to 217 (LCCTCPPPQVERPRGPRLGYSIPSRSGASGLDKRDYV) are Cytoplasmic-facing. The interval 194 to 217 (RGPRLGYSIPSRSGASGLDKRDYV) is disordered.

The protein belongs to the claudin family. Interacts with CLDN1, CD81 and OCLN. Expressed in the liver, in peripheral blood mononuclear cells and hepatocarcinoma cell lines.

The protein resides in the cell junction. Its subcellular location is the tight junction. The protein localises to the cell membrane. Functionally, plays a major role in tight junction-specific obliteration of the intercellular space, through calcium-independent cell-adhesion activity. In terms of biological role, (Microbial infection) Acts as a receptor for hepatitis C virus (HCV) entry into hepatic cells. The polypeptide is Claudin-9 (CLDN9) (Homo sapiens (Human)).